Consider the following 460-residue polypeptide: MAHSRARRRKRASATQLYQTCKAAGTCPSDIIPKVEHNTIADQILKWGSLGVFFGGLGIGTGSGTGGRTGYIPLQSTPRPDIPSVPTARPPILVDTVAPGDPSIVSLVEESAIINSGAPELVPPSHAGFEITTSESTTPAILDVSVTTHTTSTSVFKNPSFADPSVVQSQPAVEAGGHILISTSSISSHPVEEIPLDTFIVSSSDSNPASSTPIPASGARPRIGLYSKALHQVQVTDPAFLSSPQRLITFDNPAYEGEDVTLHFAHNTIHEPPDDAFMDIIRLHRPAIQSRRGRVRFSRIGQRGSMYTRSGKHIGGRIHFYQDISPISAAAEEIELHPLVATAQDSGLFDIYAEPDPDVTEEPVSLSFSTSTPFQRSSVSATPWGNTTVPLSLPADMFVQPGPDIIFPTASTTTPYSPVTPALPTGPVFISGAAFYLYPTWYFARKRRKRVSLFFADVAA.

The Nuclear localization signal signature appears at 1–12; the sequence is MAHSRARRRKRA. An intrachain disulfide couples Cys21 to Cys27. Positions 443–451 match the Nuclear localization signal motif; sequence FARKRRKRV.

The protein belongs to the papillomaviridae L2 protein family. In terms of assembly, interacts with major capsid protein L1. Interacts with E2; this interaction inhibits E2 transcriptional activity but not the DNA replication function E2. Interacts with host GADD45GIP1. Interacts with host HSPA8; this interaction is required for L2 nuclear translocation. Interacts with host importins KPNB2 and KPNB3. Forms a complex with importin alpha2-beta1 heterodimers via interaction with the importin alpha2 adapter. Interacts with host DYNLT1; this interaction is essential for virus intracellular transport during entry. Interacts (via C-terminus) with host retromer subunits VPS35 and VPS29. Highly phosphorylated.

It localises to the virion. The protein localises to the host nucleus. The protein resides in the host early endosome. It is found in the host Golgi apparatus. Its function is as follows. Minor protein of the capsid that localizes along the inner surface of the virion, within the central cavities beneath the L1 pentamers. Plays a role in capsid stabilization through interaction with the major capsid protein L1. Once the virion enters the host cell, L2 escorts the genomic DNA into the nucleus by promoting escape from the endosomal compartments and traffic through the host Golgi network. Mechanistically, the C-terminus of L2 possesses a cell-penetrating peptide that protudes from the host endosome, interacts with host cytoplasmic retromer cargo and thereby mediates the capsid delivery to the host trans-Golgi network. Plays a role through its interaction with host dynein in the intracellular microtubule-dependent transport of viral capsid toward the nucleus. Mediates the viral genome import into the nucleus through binding to host importins. Once within the nucleus, L2 localizes viral genomes to host PML bodies in order to activate early gene expression for establishment of infection. Later on, promotes late gene expression by interacting with the viral E2 protein and by inhibiting its transcriptional activation functions. During virion assembly, encapsidates the genome by direct interaction with the viral DNA. The chain is Minor capsid protein L2 from Human papillomavirus 44.